The chain runs to 483 residues: Inositol-pentakisphosphate 2-kinase (483 aa).

The EXKPK motif motif lies at 140–144 (EIKPK). Residues 279–298 (SNRSGEPRKMHLSESKPHCE) are disordered. Residues 281 to 297 (RSGEPRKMHLSESKPHC) show a composition bias toward basic and acidic residues.

Belongs to the IPK1 type 2 family. Expressed both maternally and zygotically. Expressed in cleavage-stage embryos. Ubiquitously distributed throughout blastula stages of embryogenesis. At the onset of gastrulation, it is enriched in cells around the blastoderm margin. At shield stage, expression is detected in the deep involuted cells that contribute to mesendoderm. During mid and late gastrula stages, it is strongly expressed in axial mesendoderm. However, it is not present in the nascent tailbud at yolk plug closure (YPC) stage. Expression in axial mesendoderm is reduced at the 2 somite stage (SS). At 6 SS, it is expressed in cells surrounding Kupffer's vesicle, but apparently not within. By 10 SS, it is no longer detected as a specific signal above background.

Its subcellular location is the cytoplasm. It localises to the nucleus. It carries out the reaction 1D-myo-inositol 1,3,4,5,6-pentakisphosphate + ATP = 1D-myo-inositol hexakisphosphate + ADP + H(+). Its function is as follows. Phosphorylates Ins(1,3,4,5,6)P5 at position 2 to form Ins(1,2,3,4,5,6)P6 (InsP6 or phytate). InsP6 is involved in many processes such as mRNA export, non-homologous end-joining, endocytosis and ion channel regulation. InsP6 also acts as a key regulator of left-right asymmetry in embryo, probably by regulating asymmetric Ca(2+) during left-right specification. In Danio rerio (Zebrafish), this protein is Inositol-pentakisphosphate 2-kinase (ippk).